Reading from the N-terminus, the 100-residue chain is Integration host factor subunit alpha (100 aa).

Residues Phe53–Val72 form a disordered region.

Belongs to the bacterial histone-like protein family. In terms of assembly, heterodimer of an alpha and a beta chain.

This protein is one of the two subunits of integration host factor, a specific DNA-binding protein that functions in genetic recombination as well as in transcriptional and translational control. The protein is Integration host factor subunit alpha of Neisseria gonorrhoeae (strain ATCC 700825 / FA 1090).